The chain runs to 353 residues: Melatonin receptor type 1A (353 aa).

A disordered region spans residues 1-26 (MRANGSELNGTVLPRDPPAEGSPRRP). The Extracellular portion of the chain corresponds to 1-32 (MRANGSELNGTVLPRDPPAEGSPRRPPWVTST). N-linked (GlcNAc...) asparagine glycans are attached at residues N4 and N9. The helical transmembrane segment at 33–53 (LATILIFTIVVDLLGNLLVIL) threads the bilayer. Residues 54 to 66 (SVYRNKKLRNAGN) are Cytoplasmic-facing. A helical membrane pass occupies residues 67-87 (IFVVSLAIADLVVAIYPYPLV). Over 88–105 (LTSVFHNGWNLGYLHCQI) the chain is Extracellular. A disulfide bond links C103 and C180. The helical transmembrane segment at 106-126 (SGFLMGLSVIGSIFNITGIAI) threads the bilayer. At 127 to 145 (NRYCYICHSLKYDKLYSDK) the chain is on the cytoplasmic side. Residues 146 to 166 (NSLCYVGLIWVLTVVAIVPNL) traverse the membrane as a helical segment. At 167-190 (FVGSLQYDPRIYSCTFAQSVSSAY) the chain is on the extracellular side. The chain crosses the membrane as a helical span at residues 191-211 (TIAVVFFHFILPIAIVTYCYL). Residues 212 to 243 (RIWILVIQVRRRVKPDNNPRLKPHDFRNFVTM) are Cytoplasmic-facing. Residues 244–264 (FVVFVLFAVCWAPLNFIGLAV) form a helical membrane-spanning segment. Over 265–277 (AVDPETIIPRIPE) the chain is Extracellular. Residues 278-298 (WLFVSSYYMAYFNSCLNAIIY) form a helical membrane-spanning segment. The Cytoplasmic portion of the chain corresponds to 299 to 353 (GLLNQNFRREYKKIVVSFCTAKAFFQDSSNDAADRIRSKPSPLITNNNQVKVDSV).

Belongs to the G-protein coupled receptor 1 family. As to expression, expressed in optic tectum and retina, less in neostriatum, hypothalamus and thalamus.

The protein resides in the cell membrane. Its function is as follows. High affinity receptor for melatonin. The activity of this receptor is mediated by pertussis toxin sensitive G proteins that inhibits adenylate cyclase activity. This Gallus gallus (Chicken) protein is Melatonin receptor type 1A.